We begin with the raw amino-acid sequence, 140 residues long: Cell division protein SepF (140 aa).

Positions 15–47 (DSQYEEPTEASQAAAPTESATNTRSTPKVVPMQ) are disordered.

Belongs to the SepF family. In terms of assembly, homodimer. Interacts with FtsZ.

It is found in the cytoplasm. Its function is as follows. Cell division protein that is part of the divisome complex and is recruited early to the Z-ring. Probably stimulates Z-ring formation, perhaps through the cross-linking of FtsZ protofilaments. Its function overlaps with FtsA. This is Cell division protein SepF from Lactiplantibacillus plantarum (strain ATCC BAA-793 / NCIMB 8826 / WCFS1) (Lactobacillus plantarum).